Consider the following 86-residue polypeptide: Small ribosomal subunit protein uS17 (86 aa).

It belongs to the universal ribosomal protein uS17 family. In terms of assembly, part of the 30S ribosomal subunit.

Functionally, one of the primary rRNA binding proteins, it binds specifically to the 5'-end of 16S ribosomal RNA. The polypeptide is Small ribosomal subunit protein uS17 (Tropheryma whipplei (strain TW08/27) (Whipple's bacillus)).